The sequence spans 252 residues: Ditrans,polycis-undecaprenyl-diphosphate synthase ((2E,6E)-farnesyl-diphosphate specific) (252 aa).

Asp25 is a catalytic residue. Asp25 contacts Mg(2+). Substrate contacts are provided by residues 26–29, Trp30, Arg38, His42, and 70–72; these read GNGR and SSE. Catalysis depends on Asn73, which acts as the Proton acceptor. 3 residues coordinate substrate: Trp74, Arg76, and Arg193. His198 is a Mg(2+) binding site. 199 to 201 serves as a coordination point for substrate; it reads RIS. Glu212 is a Mg(2+) binding site.

Belongs to the UPP synthase family. Homodimer. Mg(2+) serves as cofactor.

The enzyme catalyses 8 isopentenyl diphosphate + (2E,6E)-farnesyl diphosphate = di-trans,octa-cis-undecaprenyl diphosphate + 8 diphosphate. Its function is as follows. Catalyzes the sequential condensation of isopentenyl diphosphate (IPP) with (2E,6E)-farnesyl diphosphate (E,E-FPP) to yield (2Z,6Z,10Z,14Z,18Z,22Z,26Z,30Z,34E,38E)-undecaprenyl diphosphate (di-trans,octa-cis-UPP). UPP is the precursor of glycosyl carrier lipid in the biosynthesis of bacterial cell wall polysaccharide components such as peptidoglycan and lipopolysaccharide. This is Ditrans,polycis-undecaprenyl-diphosphate synthase ((2E,6E)-farnesyl-diphosphate specific) from Salmonella typhi.